A 342-amino-acid chain; its full sequence is Protein RecA (342 aa).

Residue 65 to 72 (GPESSGKT) coordinates ATP.

The protein belongs to the RecA family.

Its subcellular location is the cytoplasm. In terms of biological role, can catalyze the hydrolysis of ATP in the presence of single-stranded DNA, the ATP-dependent uptake of single-stranded DNA by duplex DNA, and the ATP-dependent hybridization of homologous single-stranded DNAs. It interacts with LexA causing its activation and leading to its autocatalytic cleavage. This is Protein RecA from Teredinibacter turnerae (strain ATCC 39867 / T7901).